The primary structure comprises 348 residues: Flagellar P-ring protein (348 aa).

A signal peptide spans 1–24 (MRRKNNNKIWIWVATLILSISALY).

This sequence belongs to the FlgI family. In terms of assembly, the basal body constitutes a major portion of the flagellar organelle and consists of four rings (L,P,S, and M) mounted on a central rod.

The protein resides in the periplasm. Its subcellular location is the bacterial flagellum basal body. Functionally, assembles around the rod to form the L-ring and probably protects the motor/basal body from shearing forces during rotation. In Helicobacter hepaticus (strain ATCC 51449 / 3B1), this protein is Flagellar P-ring protein.